Reading from the N-terminus, the 200-residue chain is MAEQGLEGSQPVDPIKHPSGIVPTLQNIVSTVNLDCKLDLKAIALQARNAEYNPKRFAAVIMRIREPKTTALIFASGKMVCTGAKSEQQSKLAARKYARIIQKLGFPAKFKDFKIQNIVGSCDVKFPIRLEGLAYSHGAFSSYEPELFPGLIYRMKQPKIVLLIFVSGKIVLTGAKVREETYTAFENIYPVLTEFRKNQQ.

2 repeat units span residues 25–101 (LQNI…ARII) and 115–192 (IQNI…YPVL).

It belongs to the TBP family. As to quaternary structure, belongs to the TFIID complex together with the TBP-associated factors (TAFs). Binds DNA as monomer.

The protein resides in the nucleus. Its function is as follows. General transcription factor that functions at the core of the DNA-binding multiprotein factor TFIID. Binding of TFIID to the TATA box is the initial transcriptional step of the pre-initiation complex (PIC), playing a role in the activation of eukaryotic genes transcribed by RNA polymerase II. This Mesembryanthemum crystallinum (Common ice plant) protein is TATA-box-binding protein.